We begin with the raw amino-acid sequence, 115 residues long: Phosphorelay protein LuxU (115 aa).

Positions 17 to 107 (GADNVPVLLE…DRLHQTQQAY (91 aa)) constitute an HPt domain. Residue His56 is modified to Phosphohistidine.

Monomer.

In terms of biological role, phosphorelay protein which receives a sensory signal from a sensor kinase and transmit it to LuxO. At low cell density, a phosphoryl group is transferred from the sensor kinase, probably on His-56 and this phosphoryl group is further transferred to LuxO. The sequence is that of Phosphorelay protein LuxU (luxU) from Vibrio vulnificus (strain CMCP6).